Reading from the N-terminus, the 248-residue chain is 14-3-3 protein sigma (248 aa).

Residues S5, S74, and S248 each carry the phosphoserine modification.

It belongs to the 14-3-3 family. As to quaternary structure, homodimer. Interacts with KRT17 and SAMSN1. Found in a complex with XPO7, EIF4A1, ARHGAP1, VPS26A, VPS29 and VPS35. Interacts with GAB2. Interacts with SRPK2. Interacts with COPS6. Interacts with COP1; this interaction leads to proteasomal degradation. Interacts with the 'Thr-369' phosphorylated form of DAPK2. Interacts with PI4KB. Interacts with SLITRK1. Interacts with LRRK2; this interaction is dependent on LRRK2 phosphorylation. Interacts with PKP3 (via N-terminus); the interaction maintains the cytoplasmic pool of PKP3, facilitates PKP3 exchange at desmosomes and restricts PKP3 localization to existing desmosome cell junctions. Interacts with LCP2. In terms of processing, ubiquitinated. Ubiquitination by RFFL induces proteasomal degradation and indirectly regulates p53/TP53 activation.

The protein resides in the cytoplasm. Its subcellular location is the nucleus. It localises to the secreted. Functionally, adapter protein implicated in the regulation of a large spectrum of both general and specialized signaling pathways. Binds to a large number of partners, usually by recognition of a phosphoserine or phosphothreonine motif. Binding generally results in the modulation of the activity of the binding partner. Promotes cytosolic retention of GBP1 GTPase by binding to phosphorylated GBP1, thereby inhibiting the innate immune response. Also acts as a TP53/p53-regulated inhibitor of G2/M progression. When bound to KRT17, regulates protein synthesis and epithelial cell growth by stimulating Akt/mTOR pathway. Acts to maintain desmosome cell junction adhesion in epithelial cells via interacting with and sequestering PKP3 to the cytoplasm, thereby restricting its translocation to existing desmosome structures and therefore maintaining desmosome protein homeostasis. Also acts to facilitate PKP3 exchange at desmosome plaques, thereby maintaining keratinocyte intercellular adhesion. May also regulate MDM2 autoubiquitination and degradation and thereby activate p53/TP53. This Bos taurus (Bovine) protein is 14-3-3 protein sigma (SFN).